Here is a 162-residue protein sequence, read N- to C-terminus: MNTLRSYIKSFLLWELLLGLKLTGRYLFTKKVTVQFPEERTPQSPRFRGLHALRRYPNGEERCIACKLCEAVCPALAITIDSEQREDGTRRTTRYDIDLFKCIYCGFCEESCPVDSIVETRILDYHFEERGEHILHKEQLLALGDKYEAQIAADRAADAPYR.

4Fe-4S ferredoxin-type domains are found at residues Leu-53–Glu-83 and Thr-93–Ile-122. Positions 63, 66, 69, 73, 102, 105, 108, and 112 each coordinate [4Fe-4S] cluster.

It belongs to the complex I 23 kDa subunit family. In terms of assembly, NDH-1 is composed of 14 different subunits. Subunits NuoA, H, J, K, L, M, N constitute the membrane sector of the complex. The cofactor is [4Fe-4S] cluster.

It localises to the cell inner membrane. The enzyme catalyses a quinone + NADH + 5 H(+)(in) = a quinol + NAD(+) + 4 H(+)(out). In terms of biological role, NDH-1 shuttles electrons from NADH, via FMN and iron-sulfur (Fe-S) centers, to quinones in the respiratory chain. The immediate electron acceptor for the enzyme in this species is believed to be ubiquinone. Couples the redox reaction to proton translocation (for every two electrons transferred, four hydrogen ions are translocated across the cytoplasmic membrane), and thus conserves the redox energy in a proton gradient. This is NADH-quinone oxidoreductase subunit I 2 from Nitrosococcus oceani (strain ATCC 19707 / BCRC 17464 / JCM 30415 / NCIMB 11848 / C-107).